Reading from the N-terminus, the 60-residue chain is U20-myrmicitoxin-Mri1a (60 aa).

A signal peptide spans M1 to G24. Positions E25–A34 are excised as a propeptide.

This sequence belongs to the formicidae venom precursor-01 superfamily. Expressed by the venom gland.

The protein localises to the secreted. Functionally, induces paralysis 5 minutes after injection into blowflies (L.caesar), and then death within 24 hours. May have antimicrobial properties, like most ant linear peptides. The polypeptide is U20-myrmicitoxin-Mri1a (Manica rubida (European giant red ant)).